A 412-amino-acid chain; its full sequence is MMSAASTNPEFPIATSGTKDIVLAFSGGLDTSFCIPYLQERGYAVHTVFADTGGVDAEEREFIEKRAAELGAASHVTVDGGPAIWEGFVKPFVWAGEGYQGQYPLLVSDRYLIVDAALKRAEELGTRIIAHGCTGMGNDQVRFDLAVKALGDYQIVAPIREIQKEHTQTRAYEQKYLEARGFGVRAKQQAYTINENLLGLTMSGGEIDRWEAPGEGARGWCAPRSAWPSEALTVTLKFVEGEAVELDGKPLPGAKILAKLNTLFAQYGVGRGVYTGDTVIGLKGRIVFEAPGLISLLTAHRALEDAVLTKQQNRFKPDVARKWVELVYEGFYHDPLKSDIEAFLKSSQAKVNGEVTLETRGGRVDAVAVRSPHLLNTKGATYAQSADWGVEEAEGFIKLFGMSSTLYAQVNR.

ATP-binding positions include 24–32 (AFSGGLDTS) and Ala-50. L-citrulline is bound by residues Tyr-103 and Ser-108. Gly-132 is a binding site for ATP. Residues Thr-134, Asn-138, and Asp-139 each coordinate L-aspartate. Asn-138 contributes to the L-citrulline binding site. L-citrulline is bound at residue Arg-142.

Belongs to the argininosuccinate synthase family. Type 1 subfamily. Homotetramer.

It is found in the cytoplasm. The enzyme catalyses L-citrulline + L-aspartate + ATP = 2-(N(omega)-L-arginino)succinate + AMP + diphosphate + H(+). It functions in the pathway amino-acid biosynthesis; L-arginine biosynthesis; L-arginine from L-ornithine and carbamoyl phosphate: step 2/3. The protein is Argininosuccinate synthase of Xanthomonas axonopodis pv. citri (strain 306).